A 494-amino-acid chain; its full sequence is Tripartite motif-containing protein 5 (494 aa).

A2 bears the N-acetylalanine mark. The RING-type zinc-finger motif lies at 15–59 (CPICLELLTEPLSLDCGHSFCQACITANHKESTPHQGERSCPLCR). Phosphoserine is present on S86. The B box-type zinc-finger motif lies at 91–132 (QKVGHCARHGEKLLLFCEQDGNVICWLCERSQEHRGHHTLLV). Zn(2+) is bound by residues C96, H99, C118, and H124. Residues 131–223 (LVEEVAEKYQ…RLVQSESDMV (93 aa)) are a coiled coil. Residues 186–199 (FKQLRDILDCEESK) are required for interaction with GABARAP and for autophagy. The 215-residue stretch at 280–494 (PDLKAMLQAF…LPMTLCSPSS (215 aa)) folds into the B30.2/SPRY domain.

Belongs to the TRIM/RBCC family. As to quaternary structure, can form homodimers and homotrimers. In addition to lower-order dimerization, also exhibits a higher-order multimerization and both low- and high-order multimerizations are essential for its restriction activity. Interacts with BTBD1 and BTBD2. Interacts with PSMC4, PSMC5, PSMD7 and HSPA8/HSC70. Interacts (via B30.2/SPRY domain) with HSPA1A/B. Interacts with PSMC2, MAP3K7/TAK1, TAB2 and TAB3. Interacts with SQSTM1. Interacts with TRIM6 and TRIM34. Interacts with ULK1 (phosphorylated form), GABARAP, GABARAPL1, GABARAPL2, MAP1LC3A, MAP1LC3C and BECN1. Post-translationally, degraded in a proteasome-independent fashion in the absence of viral infection but in a proteasome-dependent fashion following exposure to restriction sensitive virus. In terms of processing, autoubiquitinated in a RING finger- and UBE2D2-dependent manner. Monoubiquitinated by TRIM21. Deubiquitinated by Yersinia YopJ. Ubiquitination may not lead to proteasomal degradation.

It is found in the cytoplasm. The protein localises to the nucleus. The enzyme catalyses S-ubiquitinyl-[E2 ubiquitin-conjugating enzyme]-L-cysteine + [acceptor protein]-L-lysine = [E2 ubiquitin-conjugating enzyme]-L-cysteine + N(6)-ubiquitinyl-[acceptor protein]-L-lysine.. The protein operates within protein modification; protein ubiquitination. Its function is as follows. Capsid-specific restriction factor that prevents infection from non-host-adapted retroviruses. Blocks viral replication early in the life cycle, after viral entry but before reverse transcription. In addition to acting as a capsid-specific restriction factor, also acts as a pattern recognition receptor that activates innate immune signaling in response to the retroviral capsid lattice. Binding to the viral capsid triggers its E3 ubiquitin ligase activity, and in concert with the heterodimeric ubiquitin conjugating enzyme complex UBE2V1-UBE2N (also known as UBC13-UEV1A complex) generates 'Lys-63'-linked polyubiquitin chains, which in turn are catalysts in the autophosphorylation of the MAP3K7/TAK1 complex (includes TAK1, TAB2, and TAB3). Activation of the MAP3K7/TAK1 complex by autophosphorylation results in the induction and expression of NF-kappa-B and MAPK-responsive inflammatory genes, thereby leading to an innate immune response in the infected cell. Plays a role in regulating autophagy through activation of autophagy regulator BECN1 by causing its dissociation from its inhibitors BCL2 and TAB2. The protein is Tripartite motif-containing protein 5 (TRIM5) of Saguinus labiatus (Red-chested mustached tamarin).